The chain runs to 200 residues: NADH-quinone oxidoreductase subunit C (200 aa).

This sequence belongs to the complex I 30 kDa subunit family. As to quaternary structure, NDH-1 is composed of 14 different subunits. Subunits NuoB, C, D, E, F, and G constitute the peripheral sector of the complex.

It localises to the cell inner membrane. It catalyses the reaction a quinone + NADH + 5 H(+)(in) = a quinol + NAD(+) + 4 H(+)(out). In terms of biological role, NDH-1 shuttles electrons from NADH, via FMN and iron-sulfur (Fe-S) centers, to quinones in the respiratory chain. The immediate electron acceptor for the enzyme in this species is believed to be ubiquinone. Couples the redox reaction to proton translocation (for every two electrons transferred, four hydrogen ions are translocated across the cytoplasmic membrane), and thus conserves the redox energy in a proton gradient. The chain is NADH-quinone oxidoreductase subunit C from Rhizobium rhizogenes (strain K84 / ATCC BAA-868) (Agrobacterium radiobacter).